The sequence spans 186 residues: 2-oxoglutarate synthase subunit KorC (186 aa).

In terms of assembly, heterotetramer of the KorA, KorB, KorC and KorD subunits.

The enzyme catalyses 2 oxidized [2Fe-2S]-[ferredoxin] + 2-oxoglutarate + CoA = succinyl-CoA + 2 reduced [2Fe-2S]-[ferredoxin] + CO2 + H(+). The protein is 2-oxoglutarate synthase subunit KorC (korC) of Methanothermobacter marburgensis (strain ATCC BAA-927 / DSM 2133 / JCM 14651 / NBRC 100331 / OCM 82 / Marburg) (Methanobacterium thermoautotrophicum).